Consider the following 78-residue polypeptide: Large ribosomal subunit protein eL38 (78 aa).

It belongs to the eukaryotic ribosomal protein eL38 family. As to quaternary structure, component of the large ribosomal subunit (LSU). Mature yeast ribosomes consist of a small (40S) and a large (60S) subunit. The 40S small subunit contains 1 molecule of ribosomal RNA (18S rRNA) and 33 different proteins (encoded by 57 genes). The large 60S subunit contains 3 rRNA molecules (25S, 5.8S and 5S rRNA) and 46 different proteins (encoded by 81 genes).

Its subcellular location is the cytoplasm. Functionally, component of the ribosome, a large ribonucleoprotein complex responsible for the synthesis of proteins in the cell. The small ribosomal subunit (SSU) binds messenger RNAs (mRNAs) and translates the encoded message by selecting cognate aminoacyl-transfer RNA (tRNA) molecules. The large subunit (LSU) contains the ribosomal catalytic site termed the peptidyl transferase center (PTC), which catalyzes the formation of peptide bonds, thereby polymerizing the amino acids delivered by tRNAs into a polypeptide chain. The nascent polypeptides leave the ribosome through a tunnel in the LSU and interact with protein factors that function in enzymatic processing, targeting, and the membrane insertion of nascent chains at the exit of the ribosomal tunnel. The chain is Large ribosomal subunit protein eL38 from Saccharomyces cerevisiae (strain ATCC 204508 / S288c) (Baker's yeast).